The following is a 340-amino-acid chain: Protein-arginine kinase (340 aa).

Positions 21 to 242 (VVLSSRIRLA…EQIIMQERVA (222 aa)) constitute a Phosphagen kinase C-terminal domain. Residues 24–28 (SSRIR), histidine 79, arginine 113, 164–168 (RASVM), and 195–200 (RGIYGE) contribute to the ATP site.

Belongs to the ATP:guanido phosphotransferase family.

It carries out the reaction L-arginyl-[protein] + ATP = N(omega)-phospho-L-arginyl-[protein] + ADP + H(+). Functionally, catalyzes the specific phosphorylation of arginine residues in proteins. In Listeria monocytogenes serovar 1/2a (strain ATCC BAA-679 / EGD-e), this protein is Protein-arginine kinase.